Reading from the N-terminus, the 272-residue chain is Indole-3-glycerol phosphate synthase (272 aa).

Belongs to the TrpC family.

The enzyme catalyses 1-(2-carboxyphenylamino)-1-deoxy-D-ribulose 5-phosphate + H(+) = (1S,2R)-1-C-(indol-3-yl)glycerol 3-phosphate + CO2 + H2O. Its pathway is amino-acid biosynthesis; L-tryptophan biosynthesis; L-tryptophan from chorismate: step 4/5. This is Indole-3-glycerol phosphate synthase from Mycolicibacterium paratuberculosis (strain ATCC BAA-968 / K-10) (Mycobacterium paratuberculosis).